Reading from the N-terminus, the 578-residue chain is Longifolene synthase (578 aa).

Residues aspartate 331, aspartate 335, and aspartate 475 each contribute to the Mg(2+) site. Positions 331–335 match the DDXXD motif motif; sequence DDLYD.

It belongs to the terpene synthase family. Tpsd subfamily. The cofactor is Mg(2+). Mn(2+) is required as a cofactor.

Its subcellular location is the cytoplasm. It carries out the reaction (2E,6E)-farnesyl diphosphate = longifolene + diphosphate. It participates in sesquiterpene biosynthesis. Its pathway is terpene metabolism; oleoresin biosynthesis. Its function is as follows. Involved in defensive oleoresin formation in conifers in response to insect attack or other injury. Involved in sesquiterpene (C15) olefins biosynthesis. Produces mainly longifolene, but also multiple minor products including alpha-longipinene, alpha-longicyclene, E-beta-farnesene, longiborneol, cyclosativene, beta-longipinene, and 12 other sesquiterpenes when used with farnesyl diphosphate (FPP) as substrate. The protein is Longifolene synthase (TPS-Lon) of Picea abies (Norway spruce).